The sequence spans 985 residues: Translation initiation factor IF-2 (985 aa).

Basic and acidic residues-rich tracts occupy residues 49–58, 65–89, and 99–113; these read QYGKKQEKSS, IQRE…RPDN, and VPNR…DKAK. A disordered region spans residues 49-401; that stretch reads QYGKKQEKSS…QQSAPPPILD (353 aa). Polar residues predominate over residues 125 to 136; that stretch reads SKTTTNSENEQT. Over residues 137–162 the composition is skewed to low complexity; it reads APRQGSAQQSGQGRPQANRPQGSQGR. 2 stretches are compositionally biased toward gly residues: residues 180–246 and 288–324; these read PQGG…GQGR and PQGG…GAGR. Over residues 349–377 the composition is skewed to basic and acidic residues; it reads KAPDKTKGDRRKNYEKDGKWADGQIEKNK. Over residues 378–391 the composition is skewed to basic residues; it reads LFKGRNNKNKKRQH. In terms of domain architecture, tr-type G spans 485–654; that stretch reads LRPPVVTIMG…LLVAEVHELK (170 aa). Residues 494–501 are G1; the sequence is GHVDHGKT. 494-501 lines the GTP pocket; that stretch reads GHVDHGKT. Residues 519 to 523 are G2; that stretch reads GITQH. Positions 540-543 are G3; the sequence is DTPG. GTP is bound by residues 540-544 and 594-597; these read DTPGH and NKMD. The G4 stretch occupies residues 594-597; sequence NKMD. The interval 630–632 is G5; sequence SAK.

It belongs to the TRAFAC class translation factor GTPase superfamily. Classic translation factor GTPase family. IF-2 subfamily.

It localises to the cytoplasm. Its function is as follows. One of the essential components for the initiation of protein synthesis. Protects formylmethionyl-tRNA from spontaneous hydrolysis and promotes its binding to the 30S ribosomal subunits. Also involved in the hydrolysis of GTP during the formation of the 70S ribosomal complex. The protein is Translation initiation factor IF-2 of Desulforamulus reducens (strain ATCC BAA-1160 / DSM 100696 / MI-1) (Desulfotomaculum reducens).